A 635-amino-acid polypeptide reads, in one-letter code: Histone-lysine N-methyltransferase Su(var)3-9 (635 aa).

The tract at residues 81–188 (ERLSEKKIKN…LNGFAKLKRR (108 aa)) is binds to Su(var)205 and Suvar(3)7. 2 disordered regions span residues 123-161 (RLCT…NSSG) and 191-210 (SCVG…MGVI). Composition is skewed to low complexity over residues 128–139 (PASSSMPASTSS) and 147–161 (RSTS…NSSG). Residues 219–278 (YVVERIECVEMDQYQPVFFVKWLGYHDSENTWESLANVADCAEMEKFVERHQQLYETYIA) form the Chromo domain. The Pre-SET domain occupies 410–474 (VGCKCTEDTE…SCSNRLVQHG (65 aa)). Zn(2+) is bound by residues C412, C414, C421, C427, C428, C456, C460, C462, and C466. In terms of domain architecture, SET spans 477–603 (VPLVLFKTAN…AGEELSFDYI (127 aa)). S-adenosyl-L-methionine contacts are provided by residues 488-490 (SGW), Y531, and 560-561 (NH). Residues C563, C623, C625, and C630 each coordinate Zn(2+). Residues 619-635 (VRVECRCGRDNCRKVLF) enclose the Post-SET domain.

Belongs to the class V-like SAM-binding methyltransferase superfamily. Histone-lysine methyltransferase family. Suvar3-9 subfamily. As to quaternary structure, interacts with Su(var)205 and Su(var)3-7. Probably associates with HDAC1/Rpd3. Interacts with Rrp6; the interaction promotes association of Rrp6 with a subset of genomic loci.

The protein resides in the nucleus. It is found in the chromosome. It localises to the centromere. The enzyme catalyses L-lysyl(9)-[histone H3] + 3 S-adenosyl-L-methionine = N(6),N(6),N(6)-trimethyl-L-lysyl(9)-[histone H3] + 3 S-adenosyl-L-homocysteine + 3 H(+). Histone methyltransferase that specifically trimethylates 'Lys-9' of histone H3 using monomethylated H3 'Lys-9' as substrate. H3 'Lys-9' trimethylation represents a specific tag for epigenetic transcriptional repression by recruiting Su(var)205/HP1 to methylated histones. Mainly functions in heterochromatin regions, thereby playing a central role in the establishment of constitutive heterochromatin at pericentric regions. Involved in heterochromatic gene silencing including the modification of position-effect-variegation. The sequence is that of Histone-lysine N-methyltransferase Su(var)3-9 (Su(var)3-9) from Drosophila melanogaster (Fruit fly).